The sequence spans 152 residues: Protein SprT-like (152 aa).

Residues 7-147 (QRLVEEVSLQ…CGKCKGKLKP (141 aa)) form the SprT-like domain. Residue His-67 coordinates Zn(2+). Glu-68 is a catalytic residue. His-71 serves as a coordination point for Zn(2+).

The protein belongs to the SprT family. It depends on Zn(2+) as a cofactor.

It localises to the cytoplasm. This is Protein SprT-like from Bacillus cereus (strain ATCC 14579 / DSM 31 / CCUG 7414 / JCM 2152 / NBRC 15305 / NCIMB 9373 / NCTC 2599 / NRRL B-3711).